Reading from the N-terminus, the 248-residue chain is Neurotrophic factor BDNF precursor form (248 aa).

The N-terminal stretch at 1-18 is a signal peptide; it reads MTILFLTMVISYFSCMKA. Residues 19–129 constitute a propeptide that is removed on maturation; it reads APMKEANVRG…AANMSMRVRR (111 aa). N-linked (GlcNAc...) asparagine glycosylation is present at asparagine 122. 3 disulfides stabilise this stretch: cysteine 142-cysteine 209, cysteine 187-cysteine 238, and cysteine 197-cysteine 240.

This sequence belongs to the NGF-beta family. In terms of assembly, monomers and homodimers. Binds to NTRK2/TRKB. Can form heterodimers with other neurotrophin family members, such as NTF3 and NTF4 (in vitro), but the physiological relevance of this is not clear. BDNF precursor form: interacts with the heterodimer formed by NGFR and SORCS2. Mature BDNF has much lower affinity for the heterodimer formed by NGFR and SORCS2. N-glycosylated and glycosulfated, contrary to mature BDNF. In terms of processing, mature BDNF is produced by proteolytic removal of the propeptide, catalyzed by a FURIN family member. In addition, the precursor form is proteolytically cleaved within the propeptide, but this is not an obligatory intermediate for the production of mature BDNF. Can be converted into mature BDNF by plasmin (PLG).

It is found in the secreted. Important signaling molecule that activates signaling cascades downstream of NTRK2. During development, promotes the survival and differentiation of selected neuronal populations of the peripheral and central nervous systems. Participates in axonal growth, pathfinding and in the modulation of dendritic growth and morphology. Major regulator of synaptic transmission and plasticity at adult synapses in many regions of the CNS. The versatility of BDNF is emphasized by its contribution to a range of adaptive neuronal responses including long-term potentiation (LTP), long-term depression (LTD), certain forms of short-term synaptic plasticity, as well as homeostatic regulation of intrinsic neuronal excitability. Its function is as follows. Important signaling molecule that activates signaling cascades downstream of NTRK2. Activates signaling cascades via the heterodimeric receptor formed by NGFR and SORCS2. Signaling via NGFR and SORCS2 plays a role in synaptic plasticity and long-term depression (LTD). Binding to NGFR and SORCS2 promotes neuronal apoptosis. Promotes neuronal growth cone collapse. This Lipotes vexillifer (Yangtze river dolphin) protein is Neurotrophic factor BDNF precursor form (BDNF).